The chain runs to 82 residues: UPF0213 protein SH2523 (82 aa).

Residues 2 to 77 (AKHYVYIVKC…KTFSRQQKLK (76 aa)) enclose the GIY-YIG domain.

Belongs to the UPF0213 family.

This is UPF0213 protein SH2523 from Staphylococcus haemolyticus (strain JCSC1435).